A 171-amino-acid polypeptide reads, in one-letter code: NADH-quinone oxidoreductase subunit I (171 aa).

4Fe-4S ferredoxin-type domains follow at residues 41-71 (LTRD…LQKT) and 81-110 (EFFR…LTPD). [4Fe-4S] cluster contacts are provided by Cys51, Cys54, Cys57, Cys61, Cys90, Cys93, Cys96, and Cys100.

This sequence belongs to the complex I 23 kDa subunit family. As to quaternary structure, NDH-1 is composed of 14 different subunits. Subunits NuoA, H, J, K, L, M, N constitute the membrane sector of the complex. [4Fe-4S] cluster is required as a cofactor.

Its subcellular location is the cell inner membrane. It carries out the reaction a quinone + NADH + 5 H(+)(in) = a quinol + NAD(+) + 4 H(+)(out). NDH-1 shuttles electrons from NADH, via FMN and iron-sulfur (Fe-S) centers, to quinones in the respiratory chain. The immediate electron acceptor for the enzyme in this species is believed to be ubiquinone. Couples the redox reaction to proton translocation (for every two electrons transferred, four hydrogen ions are translocated across the cytoplasmic membrane), and thus conserves the redox energy in a proton gradient. The protein is NADH-quinone oxidoreductase subunit I of Methylococcus capsulatus (strain ATCC 33009 / NCIMB 11132 / Bath).